Here is a 247-residue protein sequence, read N- to C-terminus: Osmotin-like protein OSML81 (247 aa).

Residues Met-1 to Ala-21 form the signal peptide. 8 cysteine pairs are disulfide-bonded: Cys-30–Cys-225, Cys-72–Cys-82, Cys-87–Cys-93, Cys-141–Cys-213, Cys-146–Cys-196, Cys-154–Cys-164, Cys-168–Cys-177, and Cys-178–Cys-183.

It belongs to the thaumatin family.

The protein is Osmotin-like protein OSML81 of Solanum commersonii (Commerson's wild potato).